We begin with the raw amino-acid sequence, 144 residues long: MAEELKEKRELEVEEDNTKKDNSDKKSKVKRRRRNYDDLDAEVTKDEKSRKTKSGKSGKNGSDSESEVDDAKLDTMISLEDEQEDDLAEIDTSNIIVTGRRTRGKIIDYKKAAEELAAEGKISLDEDEDEDDEDAKEDDGEFDE.

The segment covering 1 to 26 has biased composition (basic and acidic residues); that stretch reads MAEELKEKRELEVEEDNTKKDNSDKK. Disordered stretches follow at residues 1-85 and 117-144; these read MAEE…EQED and AAEGKISLDEDEDEDDEDAKEDDGEFDE. A compositionally biased stretch (acidic residues) spans 125-144; that stretch reads DEDEDEDDEDAKEDDGEFDE.

Belongs to the CHZ1 family. In terms of assembly, forms a heterotrimer with H2A.Z-H2B, stabilizing the association of the histone dimer. Also, with a lower affinity, forms a heterotrimer with H2A-H2B.

The protein resides in the nucleus. Its function is as follows. Forms a chaperone-bound H2A.Z-H2B complex that acts as a source for SWR1 complex-dependent H2A to H2A.Z histone replacement in chromatin. The protein is Histone H2A.Z-specific chaperone CHZ1 (CHZ1) of Vanderwaltozyma polyspora (strain ATCC 22028 / DSM 70294 / BCRC 21397 / CBS 2163 / NBRC 10782 / NRRL Y-8283 / UCD 57-17) (Kluyveromyces polysporus).